The primary structure comprises 492 residues: Serine incorporator 4 (492 aa).

Helical transmembrane passes span 58 to 78 (FYIL…SKTV), 113 to 133 (AVYR…VLLV), 148 to 168 (SFWS…FCIP), 179 to 199 (IGIC…TAFA), 217 to 237 (FLGV…GAVL), 254 to 274 (LLSL…APCI), 281 to 301 (SGLL…FSAL), 330 to 350 (IPDA…VLFA), 421 to 441 (GFHF…TNWF), and 464 to 484 (VASC…PLLA).

This sequence belongs to the TDE1 family.

It is found in the membrane. Incorporates a polar amino acid serine into membranes and facilitates the synthesis of two serine-derived lipids, phosphatidylserine and sphingolipids. In Rattus norvegicus (Rat), this protein is Serine incorporator 4 (Serinc4).